The following is a 284-amino-acid chain: Phosphatidylserine decarboxylase proenzyme (284 aa).

Residues Asp-88, His-145, and Ser-251 each act as charge relay system; for autoendoproteolytic cleavage activity in the active site. Residue Ser-251 is the Schiff-base intermediate with substrate; via pyruvic acid; for decarboxylase activity of the active site. Ser-251 carries the pyruvic acid (Ser); by autocatalysis modification.

Belongs to the phosphatidylserine decarboxylase family. PSD-B subfamily. Prokaryotic type I sub-subfamily. As to quaternary structure, heterodimer of a large membrane-associated beta subunit and a small pyruvoyl-containing alpha subunit. It depends on pyruvate as a cofactor. In terms of processing, is synthesized initially as an inactive proenzyme. Formation of the active enzyme involves a self-maturation process in which the active site pyruvoyl group is generated from an internal serine residue via an autocatalytic post-translational modification. Two non-identical subunits are generated from the proenzyme in this reaction, and the pyruvate is formed at the N-terminus of the alpha chain, which is derived from the carboxyl end of the proenzyme. The autoendoproteolytic cleavage occurs by a canonical serine protease mechanism, in which the side chain hydroxyl group of the serine supplies its oxygen atom to form the C-terminus of the beta chain, while the remainder of the serine residue undergoes an oxidative deamination to produce ammonia and the pyruvoyl prosthetic group on the alpha chain. During this reaction, the Ser that is part of the protease active site of the proenzyme becomes the pyruvoyl prosthetic group, which constitutes an essential element of the active site of the mature decarboxylase.

Its subcellular location is the cell membrane. The catalysed reaction is a 1,2-diacyl-sn-glycero-3-phospho-L-serine + H(+) = a 1,2-diacyl-sn-glycero-3-phosphoethanolamine + CO2. Its pathway is phospholipid metabolism; phosphatidylethanolamine biosynthesis; phosphatidylethanolamine from CDP-diacylglycerol: step 2/2. Catalyzes the formation of phosphatidylethanolamine (PtdEtn) from phosphatidylserine (PtdSer). This is Phosphatidylserine decarboxylase proenzyme from Polaromonas sp. (strain JS666 / ATCC BAA-500).